A 41-amino-acid chain; its full sequence is Bacteriocin bavaricin-A (41 aa).

It belongs to the bacteriocin class IIA/YGNGV family.

The protein localises to the secreted. Its function is as follows. This heat stable bacteriocin shows activity against species of Lactobacillus, Listeria monocytogenes, Pediococcus, Enterococcus, Leuconostoc and Lactococcus. This chain is Bacteriocin bavaricin-A, found in Latilactobacillus sakei (Lactobacillus sakei).